Consider the following 649-residue polypeptide: DNA mismatch repair protein MutL (649 aa).

This sequence belongs to the DNA mismatch repair MutL/HexB family.

Functionally, this protein is involved in the repair of mismatches in DNA. It is required for dam-dependent methyl-directed DNA mismatch repair. May act as a 'molecular matchmaker', a protein that promotes the formation of a stable complex between two or more DNA-binding proteins in an ATP-dependent manner without itself being part of a final effector complex. This Streptococcus pneumoniae serotype 19F (strain G54) protein is DNA mismatch repair protein MutL.